The primary structure comprises 509 residues: Anaerobic nitric oxide reductase flavorubredoxin (509 aa).

The interval 30–210 is zinc metallo-hydrolase; the sequence is LQGSSYNSYL…PFSRLVTAKI (181 aa). Fe cation-binding residues include His79, Glu81, Asp83, His147, Asp166, and His227. Residues 254–393 enclose the Flavodoxin-like domain; sequence ITLFYDTMSN…VCREHGREIA (140 aa). FMN-binding positions include 260–264 and 342–369; these read TMSNN and AFGSYGWNGGAVDRVQTRLMDAGFETTL. Residues 457 to 508 enclose the Rubredoxin-like domain; sequence SGCMQCSVCQWIYDPALGEPMQDVTPGTMWSDVPDSFLCPECGLGKDVFNPI. Residues Cys462, Cys465, Cys495, and Cys498 each contribute to the Fe cation site.

The protein in the N-terminal section; belongs to the zinc metallo-hydrolase group 3 family. Homotetramer. Requires Fe cation as cofactor. FMN serves as cofactor.

It is found in the cytoplasm. Its pathway is nitrogen metabolism; nitric oxide reduction. In terms of biological role, anaerobic nitric oxide reductase; uses NADH to detoxify nitric oxide (NO), protecting several 4Fe-4S NO-sensitive enzymes. Has at least 2 reductase partners, only one of which (NorW, flavorubredoxin reductase) has been identified. NO probably binds to the di-iron center; electrons enter from the NorW at rubredoxin and are transferred sequentially to the FMN center and the di-iron center. Also able to function as an aerobic oxygen reductase. The chain is Anaerobic nitric oxide reductase flavorubredoxin from Pectobacterium atrosepticum (strain SCRI 1043 / ATCC BAA-672) (Erwinia carotovora subsp. atroseptica).